Reading from the N-terminus, the 251-residue chain is Imidazole glycerol phosphate synthase subunit HisF (251 aa).

Active-site residues include D11 and D130.

This sequence belongs to the HisA/HisF family. In terms of assembly, heterodimer of HisH and HisF.

It localises to the cytoplasm. The catalysed reaction is 5-[(5-phospho-1-deoxy-D-ribulos-1-ylimino)methylamino]-1-(5-phospho-beta-D-ribosyl)imidazole-4-carboxamide + L-glutamine = D-erythro-1-(imidazol-4-yl)glycerol 3-phosphate + 5-amino-1-(5-phospho-beta-D-ribosyl)imidazole-4-carboxamide + L-glutamate + H(+). It participates in amino-acid biosynthesis; L-histidine biosynthesis; L-histidine from 5-phospho-alpha-D-ribose 1-diphosphate: step 5/9. In terms of biological role, IGPS catalyzes the conversion of PRFAR and glutamine to IGP, AICAR and glutamate. The HisF subunit catalyzes the cyclization activity that produces IGP and AICAR from PRFAR using the ammonia provided by the HisH subunit. This chain is Imidazole glycerol phosphate synthase subunit HisF, found in Prosthecochloris aestuarii (strain DSM 271 / SK 413).